The sequence spans 616 residues: Chaperone protein HscA (616 aa).

It belongs to the heat shock protein 70 family.

Its function is as follows. Chaperone involved in the maturation of iron-sulfur cluster-containing proteins. Has a low intrinsic ATPase activity which is markedly stimulated by HscB. Involved in the maturation of IscU. The protein is Chaperone protein HscA of Pectobacterium atrosepticum (strain SCRI 1043 / ATCC BAA-672) (Erwinia carotovora subsp. atroseptica).